A 369-amino-acid polypeptide reads, in one-letter code: Phosphate-binding protein PstS 3 (369 aa).

The first 21 residues, 1-21, serve as a signal peptide directing secretion; the sequence is MKLNQFGAAIGLLATGALLSG. Cysteine 22 carries the N-palmitoyl cysteine lipid modification. A lipid anchor (S-diacylglycerol cysteine) is attached at cysteine 22. Phosphate is bound by residues 55–57, serine 85, aspartate 103, and 190–192; these read STA and SGT.

Belongs to the PstS family. As to quaternary structure, the complex is composed of two ATP-binding proteins (PstB), two transmembrane proteins (PstC and PstA) and a solute-binding protein (PstS).

The protein localises to the cell membrane. Its function is as follows. Part of the ABC transporter complex PstSACB involved in phosphate import. The protein is Phosphate-binding protein PstS 3 (pstS2) of Mycobacterium leprae (strain TN).